Consider the following 627-residue polypeptide: Plastin-3 (627 aa).

2 EF-hand domains span residues 8–43 and 48–83; these read EELE…ANLP and KVRE…LKSG. Ca(2+) is bound by residues aspartate 21, asparagine 23, asparagine 25, glutamate 32, aspartate 61, asparagine 63, aspartate 65, methionine 67, and glutamate 72. Actin-binding stretches follow at residues 105–378 and 379–624; these read TSEL…ALTK and PENQ…GRGM. Calponin-homology (CH) domains lie at 119 to 235, 263 to 374, 393 to 503, and 515 to 624; these read EEER…KIGL, LSPE…NKYP, TREE…RRYT, and KVND…GRGM.

The protein resides in the cytoplasm. Its function is as follows. Actin-bundling protein. This Danio rerio (Zebrafish) protein is Plastin-3 (pls3).